The chain runs to 325 residues: Beta-ketoacyl-[acyl-carrier-protein] synthase III (325 aa).

Residues Cys112 and His250 contribute to the active site. The segment at 251-255 (QANSR) is ACP-binding. Asn280 is a catalytic residue.

Belongs to the thiolase-like superfamily. FabH family. As to quaternary structure, homodimer.

It localises to the cytoplasm. The catalysed reaction is malonyl-[ACP] + acetyl-CoA + H(+) = 3-oxobutanoyl-[ACP] + CO2 + CoA. It participates in lipid metabolism; fatty acid biosynthesis. Its function is as follows. Catalyzes the condensation reaction of fatty acid synthesis by the addition to an acyl acceptor of two carbons from malonyl-ACP. Catalyzes the first condensation reaction which initiates fatty acid synthesis and may therefore play a role in governing the total rate of fatty acid production. Possesses both acetoacetyl-ACP synthase and acetyl transacylase activities. Its substrate specificity determines the biosynthesis of branched-chain and/or straight-chain of fatty acids. This chain is Beta-ketoacyl-[acyl-carrier-protein] synthase III, found in Lactococcus lactis subsp. lactis (strain IL1403) (Streptococcus lactis).